A 493-amino-acid chain; its full sequence is Galactose-1-phosphate uridylyltransferase (493 aa).

It belongs to the galactose-1-phosphate uridylyltransferase type 2 family.

It is found in the cytoplasm. The enzyme catalyses alpha-D-galactose 1-phosphate + UDP-alpha-D-glucose = alpha-D-glucose 1-phosphate + UDP-alpha-D-galactose. It participates in carbohydrate metabolism; galactose metabolism. The chain is Galactose-1-phosphate uridylyltransferase from Streptococcus thermophilus (strain ATCC BAA-250 / LMG 18311).